The primary structure comprises 408 residues: Lysosome-associated membrane glycoprotein 3 (408 aa).

The first 20 residues, 1–20, serve as a signal peptide directing secretion; the sequence is MPGQTSAVAVLLCLAVILHG. The Lumenal portion of the chain corresponds to 21–373; that stretch reads YQIREKEFPE…IVDECLSDYT (353 aa). Residues Asn-55 and Asn-225 are each glycosylated (N-linked (GlcNAc...) asparagine). Residues Cys-230 and Cys-267 are joined by a disulfide bond. A glycan (N-linked (GlcNAc...) asparagine) is linked at Asn-284. Residues Cys-331 and Cys-368 are joined by a disulfide bond. Residues 374 to 394 traverse the membrane as a helical segment; the sequence is VVLPVVGIIVVVLCVVGLGIY. Topologically, residues 395–408 are cytoplasmic; it reads KIRQRRQSSAYQRI.

This sequence belongs to the LAMP family. In terms of assembly, monomer. Interacts with FURIN.

The protein resides in the cell surface. Its subcellular location is the lysosome membrane. It is found in the cytoplasmic vesicle membrane. It localises to the early endosome membrane. Functionally, lysosomal membrane glycoprotein which plays a role in the unfolded protein response (UPR) that contributes to protein degradation and cell survival during proteasomal dysfunction. Plays a role in the process of fusion of the lysosome with the autophagosome, thereby modulating the autophagic process. Promotes hepatocellular lipogenesis through activation of the PI3K/Akt pathway. May also play a role in dendritic cell function and in adaptive immunity. This chain is Lysosome-associated membrane glycoprotein 3 (Lamp3), found in Rattus norvegicus (Rat).